Here is a 196-residue protein sequence, read N- to C-terminus: Pyridoxal 5'-phosphate synthase subunit PdxT (196 aa).

Gly-47–Ser-49 serves as a coordination point for L-glutamine. Cys-79 functions as the Nucleophile in the catalytic mechanism. L-glutamine is bound by residues Arg-106 and Ile-134–Arg-135. Active-site charge relay system residues include His-170 and Glu-172.

Belongs to the glutaminase PdxT/SNO family. In the presence of PdxS, forms a dodecamer of heterodimers. Only shows activity in the heterodimer.

The catalysed reaction is aldehydo-D-ribose 5-phosphate + D-glyceraldehyde 3-phosphate + L-glutamine = pyridoxal 5'-phosphate + L-glutamate + phosphate + 3 H2O + H(+). It carries out the reaction L-glutamine + H2O = L-glutamate + NH4(+). It functions in the pathway cofactor biosynthesis; pyridoxal 5'-phosphate biosynthesis. Catalyzes the hydrolysis of glutamine to glutamate and ammonia as part of the biosynthesis of pyridoxal 5'-phosphate. The resulting ammonia molecule is channeled to the active site of PdxS. This is Pyridoxal 5'-phosphate synthase subunit PdxT from Bacillus cereus (strain B4264).